The primary structure comprises 137 residues: Cytochrome b5 (137 aa).

Residues 6 to 82 enclose the Cytochrome b5 heme-binding domain; sequence KKVYTLEEVA…MDEYYVGDID (77 aa). Heme is bound by residues histidine 41 and histidine 65. The helical transmembrane segment at 108–128 threads the bilayer; that stretch reads FIIKILQFLVPLAILGLAVAI.

It belongs to the cytochrome b5 family.

The protein localises to the endoplasmic reticulum membrane. It is found in the microsome membrane. Functionally, membrane bound hemoprotein which function as an electron carrier for several membrane bound oxygenases. In Oryza sativa subsp. japonica (Rice), this protein is Cytochrome b5.